We begin with the raw amino-acid sequence, 232 residues long: Ribonuclease 3 (232 aa).

The RNase III domain maps to 5 to 134 (QTVLKNHFAI…FLGALLLDKD (130 aa)). Position 47 (Glu47) interacts with Mg(2+). Asp51 is an active-site residue. Residues Asp120 and Glu123 each coordinate Mg(2+). Glu123 is a catalytic residue. The DRBM domain occupies 160–229 (DYKTHLQELL…AKNAVEKGLD (70 aa)).

Belongs to the ribonuclease III family. Homodimer. Mg(2+) is required as a cofactor.

It is found in the cytoplasm. The catalysed reaction is Endonucleolytic cleavage to 5'-phosphomonoester.. In terms of biological role, digests double-stranded RNA. Involved in the processing of primary rRNA transcript to yield the immediate precursors to the large and small rRNAs (23S and 16S). Processes some mRNAs, and tRNAs when they are encoded in the rRNA operon. Processes pre-crRNA and tracrRNA of type II CRISPR loci if present in the organism. In Streptococcus pneumoniae serotype 4 (strain ATCC BAA-334 / TIGR4), this protein is Ribonuclease 3.